Reading from the N-terminus, the 157-residue chain is UPF0225 protein Psyr_3863 (157 aa).

This sequence belongs to the UPF0225 family.

The chain is UPF0225 protein Psyr_3863 from Pseudomonas syringae pv. syringae (strain B728a).